The following is a 285-amino-acid chain: Ribonuclease H1 (285 aa).

Positions 72-122 are disordered; it reads RSSSSPDGSKGQESAHVQKLQVKTSKRPREPLGEEEEPPEPGAKHTRQDTE. Positions 135-281 constitute an RNase H type-1 domain; that stretch reads MGESVVVYTD…ADRLAREGAK (147 aa). Mg(2+) is bound by residues D144, E185, D209, and D273.

The protein belongs to the RNase H family. In terms of assembly, monomer. Mg(2+) is required as a cofactor.

Its subcellular location is the cytoplasm. It carries out the reaction Endonucleolytic cleavage to 5'-phosphomonoester.. Its activity is regulated as follows. In the presence of magnesium, manganese is inhibitory. Its function is as follows. Endonuclease that specifically degrades the RNA of RNA-DNA hybrids. Plays a role in RNA polymerase II (RNAp II) transcription termination by degrading R-loop RNA-DNA hybrid formation at G-rich pause sites located downstream of the poly(A) site and behind the elongating RNAp II. The sequence is that of Ribonuclease H1 (Rnaseh1) from Rattus norvegicus (Rat).